The chain runs to 425 residues: Tumor necrosis factor receptor superfamily member 16 (425 aa).

Positions 1–29 are cleaved as a signal peptide; the sequence is MRRAGAACSAMDRLRLLLLLILGVSSGGA. The Extracellular portion of the chain corresponds to 30–253; sequence KETCSTGLYT…VTRGTTDNLI (224 aa). TNFR-Cys repeat units follow at residues 32 to 65, 67 to 108, 109 to 147, and 149 to 189; these read TCSTGLYTHSGECCKACNLGEGVAQPCGANQTVC, PCLD…DAVC, RCAYGYYQDEETGHCEACSVCEVGSGLVFSCQDKQNTVC, and ECPE…DAEC. Intrachain disulfides connect C33-C44, C45-C58, C48-C65, C68-C84, C87-C100, C90-C108, C110-C123, C126-C139, C129-C147, C150-C165, C168-C181, and C171-C189. N61 and N71 each carry an N-linked (GlcNAc...) asparagine glycan. The disordered stretch occupies residues 193-225; that stretch reads PGRWIPRSTPPEGSDSTAPSTQEPEVPPEQDLV. The segment covering 206 to 215 has biased composition (polar residues); the sequence is SDSTAPSTQE. Residues 254–274 traverse the membrane as a helical segment; the sequence is PVYCSILAAVVVGLVAYIAFK. Residues 275–425 are Cytoplasmic-facing; the sequence is RWNSCKQNKQ…CSESTATSPV (151 aa). Composition is skewed to polar residues over residues 282-292 and 306-327; these read NKQGANSRPVN and SGISVDSQSLHDQQTHTQTASG. The tract at residues 282–332 is disordered; that stretch reads NKQGANSRPVNQTPPPEGEKLHSDSGISVDSQSLHDQQTHTQTASGQALKG. S312 bears the Phosphoserine mark. Residues 327-342 form a mediates interaction with KIDINS220 region; it reads GQALKGDGNLYSSLPL. A Death domain is found at 354–419; sequence GDTWRHLAGE…DIVESLCSES (66 aa).

In terms of assembly, homodimer; disulfide-linked. Heterodimer with SORCS2. The extracellular domains of the heterodimer bind NGF. The cytoplasmic region of the heterodimer binds TRIO. NGF binding mediates dissociation of TRIO from the receptor complex. Interacts with RTN4R. Interacts with TRAF2, TRAF4 and TRAF6. Interacts with PTPN13 and RANBP9. Interacts through TRAF6 with SQSTM1 which bridges NGFR to NTRK1. Interacts with BEX1. Interacts with BEX3. Interacts with KIDINS220 and NTRK1. Can form a ternary complex with NTRK1 and KIDINS220 and this complex is affected by the expression levels of KIDINS220. An increase in KIDINS220 expression leads to a decreased association of NGFR and NTRK1. Interacts (via death domain) with RAB31. Interacts with NTRK2; may regulate the ligand specificity of the NTRK2 receptor. Interacts with LINGO1. Interacts with NRADD. Interacts with MAGED1; the interaction antagonizes the association NGFR:NTRK1. Interacts (via death domain) with ARHGDIA and RIPK2. Interacts with BFAR. Subject to intramembrane proteolytic cleavage by the gamma-secretase complex, giving rise to an intracellular fragment that is rapidly degraded via the proteasome. In terms of processing, N- and O-glycosylated. Post-translationally, phosphorylated on serine residues.

The protein localises to the cell membrane. It localises to the cytoplasm. The protein resides in the perikaryon. It is found in the cell projection. Its subcellular location is the growth cone. The protein localises to the dendritic spine. Its function is as follows. Low affinity receptor which can bind to NGF, BDNF, NTF3, and NTF4. Forms a heterodimeric receptor with SORCS2 that binds the precursor forms of NGF, BDNF and NTF3 with high affinity, and has much lower affinity for mature NGF and BDNF. In response to proNGF binding, the heterodimeric receptor with SORCS2 activates a signaling cascade that leads to decreased Rac activity, reorganization of the actin cytoskeleton and neuronal growth cone collapse. Plays an important role in differentiation and survival of specific neuronal populations during development. Can mediate cell survival as well as cell death of neural cells. Plays a role in the inactivation of RHOA. Plays a role in the regulation of the translocation of GLUT4 to the cell surface in adipocytes and skeletal muscle cells in response to insulin, probably by regulating RAB31 activity, and thereby contributes to the regulation of insulin-dependent glucose uptake. Necessary for the circadian oscillation of the clock genes BMAL1, PER1, PER2 and NR1D1 in the suprachiasmatic nucleus (SCN) of the brain and in liver and of the genes involved in glucose and lipid metabolism in the liver. This chain is Tumor necrosis factor receptor superfamily member 16 (Ngfr), found in Rattus norvegicus (Rat).